The sequence spans 576 residues: Arginine--tRNA ligase (576 aa).

The short motif at 126–136 (ANPTGPMHIGH) is the 'HIGH' region element.

The protein belongs to the class-I aminoacyl-tRNA synthetase family. As to quaternary structure, monomer.

Its subcellular location is the cytoplasm. It catalyses the reaction tRNA(Arg) + L-arginine + ATP = L-arginyl-tRNA(Arg) + AMP + diphosphate. The sequence is that of Arginine--tRNA ligase from Rickettsia africae (strain ESF-5).